A 467-amino-acid chain; its full sequence is Ribulose bisphosphate carboxylase large chain (467 aa).

The residue at position 6 (Lys-6) is an N6,N6,N6-trimethyllysine. Residues Asn-115 and Thr-165 each coordinate substrate. The Proton acceptor role is filled by Lys-167. Residue Lys-169 coordinates substrate. Mg(2+)-binding residues include Lys-193, Asp-195, and Glu-196. Residue Lys-193 is modified to N6-carboxylysine. His-286 acts as the Proton acceptor in catalysis. Residues Arg-287, His-319, and Ser-371 each contribute to the substrate site.

The protein belongs to the RuBisCO large chain family. Type I subfamily. As to quaternary structure, heterohexadecamer of 8 large chains and 8 small chains; disulfide-linked. The disulfide link is formed within the large subunit homodimers. Mg(2+) is required as a cofactor. The disulfide bond which can form in the large chain dimeric partners within the hexadecamer appears to be associated with oxidative stress and protein turnover.

The protein localises to the plastid. The protein resides in the chloroplast. The enzyme catalyses 2 (2R)-3-phosphoglycerate + 2 H(+) = D-ribulose 1,5-bisphosphate + CO2 + H2O. It catalyses the reaction D-ribulose 1,5-bisphosphate + O2 = 2-phosphoglycolate + (2R)-3-phosphoglycerate + 2 H(+). Functionally, ruBisCO catalyzes two reactions: the carboxylation of D-ribulose 1,5-bisphosphate, the primary event in carbon dioxide fixation, as well as the oxidative fragmentation of the pentose substrate in the photorespiration process. Both reactions occur simultaneously and in competition at the same active site. This chain is Ribulose bisphosphate carboxylase large chain, found in Cedrus atlantica (Atlas cedar).